The chain runs to 267 residues: tRNA pseudouridine synthase A (267 aa).

Aspartate 51 acts as the Nucleophile in catalysis. Residue tyrosine 109 coordinates substrate.

This sequence belongs to the tRNA pseudouridine synthase TruA family. As to quaternary structure, homodimer.

It carries out the reaction uridine(38/39/40) in tRNA = pseudouridine(38/39/40) in tRNA. In terms of biological role, formation of pseudouridine at positions 38, 39 and 40 in the anticodon stem and loop of transfer RNAs. This Staphylococcus aureus (strain bovine RF122 / ET3-1) protein is tRNA pseudouridine synthase A.